The chain runs to 1877 residues: Neuron navigator 1 (1877 aa).

Met1 carries the post-translational modification N-acetylmethionine. The interval 1-59 (MLGSSVKSVQPEVELSSGGGDEGADEPRGAGRKAAAADGRGMLPKRAKAPGGGGGMAKA) is disordered. Positions 32-41 (RKAAAADGRG) are enriched in low complexity. Phosphoserine occurs at positions 90, 142, and 152. Residues 114 to 225 (DMAKAPKGLG…PVPSAKGQEE (112 aa)) form a disordered region. Thr159 bears the Phosphothreonine mark. Phosphoserine is present on residues Ser194 and Ser199. The segment covering 205–214 (SSKAKAQKSS) has biased composition (low complexity). Residues 255-280 (ESQRKRTVQNVLDLRQNLEETMSSLR) adopt a coiled-coil conformation. Residues 294-336 (YDSDDANPRSVSSLSNRSSPLSWRYGQSSPRLQAGDAPSVGGS) form a disordered region. A phosphoserine mark is found at Ser296, Ser308, Ser312, Ser362, and Ser391. The span at 301 to 315 (PRSVSSLSNRSSPLS) shows a compositional bias: low complexity. Disordered regions lie at residues 386-839 (KSGY…PLPS) and 892-989 (MSLP…PMSL). Composition is skewed to low complexity over residues 411–425 (DESS…DASD) and 433–448 (NASS…PTAS). Residues Ser452, Ser474, Ser476, and Ser490 each carry the phosphoserine modification. Residues 476–486 (SEEKAPKKLEY) are compositionally biased toward basic and acidic residues. Over residues 503–519 (ERPESCDDSSKGGELKK) the composition is skewed to basic and acidic residues. Position 528 is a phosphoserine (Ser528). Thr534 bears the Phosphothreonine mark. Ser541 carries the phosphoserine modification. Thr544 bears the Phosphothreonine mark. A compositionally biased stretch (basic and acidic residues) spans 555-566 (GKPEGKATDKGK). Thr572 is modified (phosphothreonine). The span at 581-591 (AGRDRLSDAKK) shows a compositional bias: basic and acidic residues. Polar residues-rich tracts occupy residues 615–635 (GTAT…QKSS) and 645–655 (RKTSLDVSNSA). Ser648 carries the post-translational modification Phosphoserine. At Arg688 the chain carries Omega-N-methylarginine. 2 stretches are compositionally biased toward polar residues: residues 698 to 710 (IDPS…QGGL) and 724 to 733 (GRTTPAPVNQ). The stretch at 731–756 (VNQTDREKEKAKAKAVALDSDNISLK) forms a coiled coil. A phosphoserine mark is found at Ser750, Ser754, Ser760, Ser797, and Ser808. Polar residues predominate over residues 751 to 773 (DNISLKSIGSPESTPKNQASHPT). Low complexity predominate over residues 805-818 (NSNSLDLPSSSDTT). Pro residues predominate over residues 902–913 (TPVPTPPAPPAA). Position 1000 is a phosphoserine (Ser1000). Thr1006 is modified (phosphothreonine). A coiled-coil region spans residues 1072 to 1163 (SSAEERMQSE…SEAQAVIQGA (92 aa)). Residue Thr1170 is modified to Phosphothreonine. Disordered regions lie at residues 1172–1204 (KELR…KDAD), 1244–1306 (ATPD…EKKE), 1359–1383 (LKVA…LSSP), and 1810–1843 (KLYH…SLDS). A Phosphoserine modification is found at Ser1181. A compositionally biased stretch (low complexity) spans 1181–1200 (SSDSISSLNSITSHSSIGSS). Positions 1246 to 1264 (PDSSAPSSPKLQHGSTETA) are enriched in polar residues. Ser1265 bears the Phosphoserine mark. The span at 1265-1275 (SPSIKSSTSSS) shows a compositional bias: low complexity. A coiled-coil region spans residues 1303 to 1362 (EKKEVSELRSELWEKEMKLTDIRLEALNSAHQLDQLRETMHNMQLEVDLLKAENDRLKVA). Residues 1366-1383 (SSGSTPGQVPGSSALSSP) show a composition bias toward polar residues. At Ser1382 the chain carries Phosphoserine.

The protein belongs to the Nav/unc-53 family. As to quaternary structure, interacts with tubulin. In terms of tissue distribution, broadly expressed at low levels. Expressed at high levels in heart, skeletal muscle and placenta.

Its subcellular location is the cytoplasm. It localises to the cytoskeleton. May be involved in neuronal migration. This is Neuron navigator 1 (NAV1) from Homo sapiens (Human).